The sequence spans 293 residues: Glutamyl-Q tRNA(Asp) synthetase (293 aa).

L-glutamate-binding positions include R9–S13 and E45. Positions P12 to S22 match the 'HIGH' region motif. 4 residues coordinate Zn(2+): C101, C103, Y115, and C119. 2 residues coordinate L-glutamate: Y172 and R190. Positions K228–Q232 match the 'KMSKS' region motif. K231 is an ATP binding site.

This sequence belongs to the class-I aminoacyl-tRNA synthetase family. GluQ subfamily. Zn(2+) serves as cofactor.

Its function is as follows. Catalyzes the tRNA-independent activation of glutamate in presence of ATP and the subsequent transfer of glutamate onto a tRNA(Asp). Glutamate is transferred on the 2-amino-5-(4,5-dihydroxy-2-cyclopenten-1-yl) moiety of the queuosine in the wobble position of the QUC anticodon. This is Glutamyl-Q tRNA(Asp) synthetase from Klebsiella pneumoniae (strain 342).